We begin with the raw amino-acid sequence, 245 residues long: tRNA (guanine-N(1)-)-methyltransferase (245 aa).

S-adenosyl-L-methionine contacts are provided by residues Gly108 and 127 to 132 (IGDYVL).

Belongs to the RNA methyltransferase TrmD family. In terms of assembly, homodimer.

The protein resides in the cytoplasm. It carries out the reaction guanosine(37) in tRNA + S-adenosyl-L-methionine = N(1)-methylguanosine(37) in tRNA + S-adenosyl-L-homocysteine + H(+). Specifically methylates guanosine-37 in various tRNAs. The sequence is that of tRNA (guanine-N(1)-)-methyltransferase from Lactobacillus delbrueckii subsp. bulgaricus (strain ATCC 11842 / DSM 20081 / BCRC 10696 / JCM 1002 / NBRC 13953 / NCIMB 11778 / NCTC 12712 / WDCM 00102 / Lb 14).